Consider the following 112-residue polypeptide: FK506-binding protein 1A (112 aa).

In terms of domain architecture, PPIase FKBP-type spans 20 to 108 (GDFVTIHYTG…IFEVELLGIN (89 aa)).

This sequence belongs to the FKBP-type PPIase family. FKBP1 subfamily.

It localises to the cytoplasm. The enzyme catalyses [protein]-peptidylproline (omega=180) = [protein]-peptidylproline (omega=0). Inhibited by both FK506 and rapamycin. Functionally, PPIases accelerate the folding of proteins. It catalyzes the cis-trans isomerization of proline imidic peptide bonds in oligopeptides. In Aspergillus fumigatus (strain ATCC MYA-4609 / CBS 101355 / FGSC A1100 / Af293) (Neosartorya fumigata), this protein is FK506-binding protein 1A (fpr1A).